A 955-amino-acid polypeptide reads, in one-letter code: Serine-aspartate repeat-containing protein C (955 aa).

An N-terminal signal peptide occupies residues Met1–Ala50. Positions Ala51–Arg166 are disordered. The tract at residues Ala51–Lys495 is ligand binding A region. Residues Gly56–Asn71 are compositionally biased toward polar residues. Basic and acidic residues predominate over residues Lys72 to Lys83. Positions Asp84–Pro114 are enriched in polar residues. Residues Gln115–Asn132 show a composition bias toward low complexity. Residues Asp133–Lys164 show a composition bias toward polar residues. 2 CNA-B domains span residues Lys496 to Pro606 and Lys607 to Thr717. Residues Thr678–Gly935 form a disordered region. Acidic residues-rich tracts occupy residues Thr685–Glu695 and Tyr712–Ser894. Positions Leu918–Gly922 match the LPXTG sorting signal motif. Positions Glu920–Gly935 are enriched in low complexity. Thr921 carries the post-translational modification Pentaglycyl murein peptidoglycan amidated threonine. Positions Gly922–Lys955 are cleaved as a propeptide — removed by sortase.

This sequence belongs to the serine-aspartate repeat-containing protein (SDr) family. In terms of assembly, homodimerizes; via N2-Domain. Interacts with host NRXN1; this interaction mediates bacterial attachment to host cells.

It localises to the secreted. Its subcellular location is the cell wall. In terms of biological role, cell surface-associated calcium-binding protein which plays an important role in adhesion and pathogenesis. Mediates interactions with components of the extracellular matrix such as host NRXN1 to promote bacterial adhesion. The polypeptide is Serine-aspartate repeat-containing protein C (sdrC) (Staphylococcus aureus (strain MW2)).